The sequence spans 288 residues: 4-hydroxybenzoate octaprenyltransferase (288 aa).

The next 8 helical transmembrane spans lie at 23–43, 46–66, 98–118, 141–161, 163–183, 213–233, 234–254, and 268–288; these read IGSLLLLWPTLWALWLAGRGI, AKILVVFVLGVFFMRAAGCVV, ILFVVLILLSFGLVLTLNSMT, LPQVVLGAAFGWSIPMGFAAV, ESLPLVCWLLLLANICWTVAY, LIIGLLQLATLLLMVAIGWLM, NLGGAFYWSILLAGALFTHQQ, and AFLNNNYVGLVLFLGILISYW.

This sequence belongs to the UbiA prenyltransferase family. Mg(2+) serves as cofactor.

It is found in the cell inner membrane. It catalyses the reaction all-trans-octaprenyl diphosphate + 4-hydroxybenzoate = 4-hydroxy-3-(all-trans-octaprenyl)benzoate + diphosphate. It participates in cofactor biosynthesis; ubiquinone biosynthesis. In terms of biological role, catalyzes the prenylation of para-hydroxybenzoate (PHB) with an all-trans polyprenyl group. Mediates the second step in the final reaction sequence of ubiquinone-8 (UQ-8) biosynthesis, which is the condensation of the polyisoprenoid side chain with PHB, generating the first membrane-bound Q intermediate 3-octaprenyl-4-hydroxybenzoate. The polypeptide is 4-hydroxybenzoate octaprenyltransferase (Yersinia pseudotuberculosis serotype IB (strain PB1/+)).